We begin with the raw amino-acid sequence, 395 residues long: Aspergillopepsin-1 (395 aa).

An N-terminal signal peptide occupies residues 1 to 20; sequence MVVFSKVTAVVVGLSTIVSA. A propeptide spans 21 to 70 (activation peptide); the sequence is VPVVQPRKGFTINQVARPVTNKKTVNLPAVYANALTKYGGTVPDSVKAAA. One can recognise a Peptidase A1 domain in the interval 86-392; sequence YLTPVKVGGT…DSQGPRLGFA (307 aa). Catalysis depends on residues Asp-102 and Asp-284. Cys-320 and Cys-355 form a disulfide bridge.

The protein belongs to the peptidase A1 family. In terms of assembly, monomer.

It localises to the secreted. It carries out the reaction Hydrolysis of proteins with broad specificity. Generally favors hydrophobic residues in P1 and P1', but also accepts Lys in P1, which leads to activation of trypsinogen. Does not clot milk.. Secreted aspartic endopeptidase that allows assimilation of proteinaceous substrates. The scissile peptide bond is attacked by a nucleophilic water molecule activated by two aspartic residues in the active site. Shows a broad primary substrate specificity. Favors hydrophobic residues at the P1 and P1' positions, but also accepts a lysine residue in the P1 position, leading to the activation of trypsinogen and chymotrypsinogen A. This is Aspergillopepsin-1 (pepA) from Aspergillus fumigatus (strain CBS 144.89 / FGSC A1163 / CEA10) (Neosartorya fumigata).